We begin with the raw amino-acid sequence, 224 residues long: BOS complex subunit TMEM147 (224 aa).

The chain crosses the membrane as a helical span at residues Met1–Tyr21. Residues Lys22–Lys34 are Cytoplasmic-facing. A helical transmembrane segment spans residues Cys35–Pro58. The Lumenal portion of the chain corresponds to Thr59–Asp66. Residues Phe67–Met88 traverse the membrane as a helical segment. Over Ser89–Lys98 the chain is Cytoplasmic. The helical transmembrane segment at Ile99–Arg124 threads the bilayer. Topologically, residues Gly125–Asp129 are lumenal. A helical transmembrane segment spans residues Trp130–Met155. Over Ile156 to Thr164 the chain is Cytoplasmic. The chain crosses the membrane as a helical span at residues Phe165 to Val187. The Lumenal segment spans residues His188 to Ser194. A helical transmembrane segment spans residues Trp195–Tyr216. Over Val217–Ser224 the chain is Cytoplasmic.

Belongs to the TMEM147 family. In terms of assembly, component of the back of Sec61 (BOS) complex, composed of NCLN/Nicalin, NOMO (NOMO1, NOMO2 or NOMO3) and TMEM147. The BOS complex is part of the multi-pass translocon (MPT) complex, composed of three subcomplexes, the GEL complex (composed of RAB5IF/OPTI and TMCO1), the BOS complex (composed of NCLN/Nicalin, NOMO and TMEM147) and the PAT complex (composed of WDR83OS/Asterix and CCDC47). The MPT complex associates with the SEC61 complex. Interacts with CHRM3, CHRM1 and AVPR2. Interacts with LBR; promoting LBR localization to the nucleus inner membrane. Interacts with DHCR7.

The protein localises to the endoplasmic reticulum membrane. It is found in the nucleus membrane. It localises to the cell membrane. Its function is as follows. Component of the multi-pass translocon (MPT) complex that mediates insertion of multi-pass membrane proteins into the lipid bilayer of membranes. The MPT complex takes over after the SEC61 complex: following membrane insertion of the first few transmembrane segments of proteins by the SEC61 complex, the MPT complex occludes the lateral gate of the SEC61 complex to promote insertion of subsequent transmembrane regions. Also acts as a negative regulator of CHRM3 function, most likely by interfering with its trafficking to the cell membrane. Negatively regulates CHRM3-mediated calcium mobilization and activation of RPS6KA1/p90RSK activity. Regulates LBR localization to the nucleus inner membrane. The chain is BOS complex subunit TMEM147 from Homo sapiens (Human).